We begin with the raw amino-acid sequence, 397 residues long: Serpin B10 (397 aa).

Positions 74–77 (KKRK) match the Nuclear localization signal motif.

It belongs to the serpin family. Ov-serpin subfamily.

It is found in the nucleus. It localises to the cytoplasm. Functionally, protease inhibitor that may play a role in the regulation of protease activities during hematopoiesis and apoptosis induced by TNF. May regulate protease activities in the cytoplasm and in the nucleus. The protein is Serpin B10 (SERPINB10) of Plecturocebus moloch (Dusky titi monkey).